Here is a 1612-residue protein sequence, read N- to C-terminus: uncharacterized protein (1612 aa).

Residues 23–52 (ENKNIEMTTLKDKKEMKNENLSKINVKKEN) adopt a coiled-coil conformation. Positions 46-93 (INVKKENHDKNHDKNHDKNHDKNHDKNHDKNHDKNHDKNHDKNHDKNH) are enriched in basic and acidic residues. 2 disordered regions span residues 46–94 (INVK…KNHV) and 369–400 (EDDN…HEIQ). Over residues 375-394 (DNPLYSNNNTLKEQNTSTPL) the composition is skewed to polar residues. The chain crosses the membrane as a helical span at residues 479–499 (FIVTLSEICLILTPHYVNIIN). Disordered regions lie at residues 698–777 (TSLT…EKKL), 992–1037 (NELD…KNDP), 1091–1157 (SGKS…RNMS), and 1257–1291 (NQTT…NQDK). The segment covering 708–777 (KNDEIKKTGE…KKKTGEEKKL (70 aa)) has biased composition (basic and acidic residues). 3 stretches are compositionally biased toward low complexity: residues 996–1028 (NNNN…NNNN), 1102–1140 (SNNN…NSTN), and 1257–1271 (NQTT…QTSN). 3 coiled-coil regions span residues 1338–1362 (YCNN…INNK), 1444–1469 (SNKK…IDND), and 1553–1601 (NMED…KFLT). The span at 1554–1566 (MEDEKNEKLNDKE) shows a compositional bias: basic and acidic residues. The disordered stretch occupies residues 1554 to 1612 (MEDEKNEKLNDKEGEYEDVTENLNEQEAEEEAEEEAEEEEEEEDKFLTPEHLPINVEIK). Over residues 1567-1597 (GEYEDVTENLNEQEAEEEAEEEAEEEEEEED) the composition is skewed to acidic residues.

Its subcellular location is the membrane. This is an uncharacterized protein from Plasmodium falciparum (isolate 3D7).